Here is a 227-residue protein sequence, read N- to C-terminus: Prolactin (227 aa).

The first 28 residues, 1–28, serve as a signal peptide directing secretion; sequence MNIKGSPWKGSLLLLLVSNLLLCQNVAP. Cysteine 32 and cysteine 39 are disulfide-bonded. At serine 54 the chain carries Phosphoserine. Asparagine 59 carries an N-linked (GlcNAc...) asparagine glycan. Serine 62 and serine 118 each carry phosphoserine. 2 disulfide bridges follow: cysteine 86–cysteine 202 and cysteine 219–cysteine 227.

It belongs to the somatotropin/prolactin family. In terms of assembly, interacts with PRLR.

It localises to the secreted. Functionally, prolactin acts primarily on the mammary gland by promoting lactation. The chain is Prolactin (PRL) from Macaca mulatta (Rhesus macaque).